Consider the following 557-residue polypeptide: Protein PECTIC ARABINOGALACTAN SYNTHESIS-RELATED (557 aa).

A disordered region spans residues 1-54 (MAELRHSSSLGSRSSSSPLRAAGDEDSSSPHVHDHSPNGGDDEDGRPRHPSRDR). Topologically, residues 1 to 79 (MAELRHSSSL…DPRVSPQKNK (79 aa)) are cytoplasmic. Positions 7-20 (SSSLGSRSSSSPLR) are enriched in low complexity. A compositionally biased stretch (basic and acidic residues) spans 45-54 (GRPRHPSRDR). The chain crosses the membrane as a helical; Signal-anchor for type II membrane protein span at residues 80 to 100 (ISLLLILILAIASLISVYGII). The Lumenal portion of the chain corresponds to 101–557 (NHLNAPYLCK…NPLTPCMCKA (457 aa)). Residues Asn156, Asn188, and Asn324 are each glycosylated (N-linked (GlcNAc...) asparagine). 336 to 338 (HLR) provides a ligand contact to substrate. N-linked (GlcNAc...) asparagine glycosylation is present at Asn375.

The protein belongs to the glycosyltransferase GT106 family. In terms of tissue distribution, widely expressed with the highest expression in reproductive tissues and roots.

The protein resides in the golgi apparatus membrane. It functions in the pathway glycan metabolism; pectin biosynthesis. Functionally, glycosyltransferase involved in the biosynthesis of pectic type-II arabinogalactans. This chain is Protein PECTIC ARABINOGALACTAN SYNTHESIS-RELATED, found in Arabidopsis thaliana (Mouse-ear cress).